A 323-amino-acid chain; its full sequence is Small ribosomal subunit protein uS9m (323 aa).

The segment at 298–323 (TRDARKVERKKPGKVKARKSPTWVKR) is disordered. The segment covering 304–323 (VERKKPGKVKARKSPTWVKR) has biased composition (basic residues).

It belongs to the universal ribosomal protein uS9 family.

Its subcellular location is the mitochondrion. The sequence is that of Small ribosomal subunit protein uS9m (MRPS9) from Debaryomyces hansenii (strain ATCC 36239 / CBS 767 / BCRC 21394 / JCM 1990 / NBRC 0083 / IGC 2968) (Yeast).